The chain runs to 487 residues: N-succinylglutamate 5-semialdehyde dehydrogenase (487 aa).

Residue 221 to 226 (GSSRTG) coordinates NAD(+). Active-site residues include E244 and C278.

The protein belongs to the aldehyde dehydrogenase family. AstD subfamily.

It catalyses the reaction N-succinyl-L-glutamate 5-semialdehyde + NAD(+) + H2O = N-succinyl-L-glutamate + NADH + 2 H(+). The protein operates within amino-acid degradation; L-arginine degradation via AST pathway; L-glutamate and succinate from L-arginine: step 4/5. In terms of biological role, catalyzes the NAD-dependent reduction of succinylglutamate semialdehyde into succinylglutamate. The chain is N-succinylglutamate 5-semialdehyde dehydrogenase from Pseudomonas putida (strain ATCC 700007 / DSM 6899 / JCM 31910 / BCRC 17059 / LMG 24140 / F1).